A 737-amino-acid polypeptide reads, in one-letter code: Protein OPG064 (737 aa).

An N-acetylmethionine; by host modification is found at Met1. Cys496 and Cys535 are oxidised to a cystine.

The protein belongs to the orthopoxvirus OPG064 family. In terms of assembly, interacts with host KLC2; this interaction promotes IEV trafficking by engaging the host kinesin-1 complex. Interacts with protein OPG056/F12. Post-translationally, N-acetylated on initiator methionine by host.

Functionally, plays a role in intracellular enveloped virus (IEV) transport to the cell surface on microtubules. Together with protein OPG056/F12, forms a complex that interacts with host KLC2 (kinesin light chain isoform 2) to engage the kinesin-1 complex and thereby promote IEV trafficking. The chain is Protein OPG064 (OPG064) from Bos taurus (Bovine).